A 784-amino-acid chain; its full sequence is Toll-like receptor 2 (784 aa).

An N-terminal signal peptide occupies residues 1 to 20 (MPHTLWMVWVLGVIISLSKE). The Extracellular segment spans residues 21 to 587 (ESSNQASLSC…VRLSVSECHR (567 aa)). Cys-30 and Cys-36 are disulfide-bonded. LRR repeat units follow at residues 54-77 (VKSL…RCVN), 78-101 (LQAL…SLGS), 102-125 (LEHL…PLSS), 126-150 (LTFL…HLTK), 151-175 (LQIL…GLTF), 176-199 (LEEL…SIQN), 200-223 (VSHL…VTSS), 224-250 (VECL…TNSL), 251-278 (IKKF…QISG), 279-308 (LLEL…DPGK), 309-337 (VETL…LTER), 338-361 (VKRI…HLKS), 362-388 (LEYL…AWPS), 389-414 (LQTL…TLKN), 415-437 (LTNV…WPEK), 438-457 (MKYL…CIPK), 458-478 (TLEI…NLPQ), 479-500 (LKEL…LLPM), and 501-524 (LLVL…SFHT). Residue Asn-114 is glycosylated (N-linked (GlcNAc...) asparagine). Asn-199 is a glycosylation site (N-linked (GlcNAc...) asparagine). Cys-353 and Cys-382 are joined by a disulfide. Asn-414 carries an N-linked (GlcNAc...) asparagine glycan. Cys-432 and Cys-454 are oxidised to a cystine. Residue Asn-442 is glycosylated (N-linked (GlcNAc...) asparagine). The LRRCT domain occupies 525–579 (LKTLEAGGNNFICSCEFLSFTQEQQALAKVLIDWPANYLCDSPSHVRGQQVQDVR). Residues 588–608 (TALVSGMCCALFLLILLTGVL) form a helical membrane-spanning segment. Residues 609–784 (CHRFHGLWYM…WVNLRAAIKS (176 aa)) are Cytoplasmic-facing. The TIR domain maps to 639 to 782 (ICYDAFVSYS…GFWVNLRAAI (144 aa)). Lys-754 is covalently cross-linked (Glycyl lysine isopeptide (Lys-Gly) (interchain with G-Cter in ubiquitin)). The ATG16L1-binding motif motif lies at 761-778 (YLEWPMDEAQREGFWVNL).

The protein belongs to the Toll-like receptor family. Interacts with LY96, TLR1 and TLR6 (via extracellular domain). TLR2 seems to exist in heterodimers with either TLR1 or TLR6 before stimulation by the ligand. The heterodimers form bigger oligomers in response to their corresponding ligands as well as further heterotypic associations with other receptors such as CD14 and/or CD36. Binds MYD88 (via TIR domain). Interacts with TICAM1. Interacts with CNPY3. Interacts with ATG16L1. Interacts with PPP1R11. Interacts with TICAM2. Interacts with TIRAP. In terms of processing, ubiquitinated at Lys-754 by PPP1R11, leading to its degradation. Deubiquitinated by USP2. Glycosylation of Asn-442 is critical for secretion of the N-terminal ectodomain of TLR2.

The protein localises to the membrane. The protein resides in the cytoplasmic vesicle. It is found in the phagosome membrane. It localises to the membrane raft. In terms of biological role, cooperates with LY96 to mediate the innate immune response to bacterial lipoproteins and other microbial cell wall components. Cooperates with TLR1 or TLR6 to mediate the innate immune response to bacterial lipoproteins or lipopeptides. Acts via MYD88 and TRAF6, leading to NF-kappa-B activation, cytokine secretion and the inflammatory response. May also promote apoptosis in response to lipoproteins. Forms activation clusters composed of several receptors depending on the ligand, these clusters trigger signaling from the cell surface and subsequently are targeted to the Golgi in a lipid-raft dependent pathway. Forms the cluster TLR2:TLR6:CD14:CD36 in response to diacylated lipopeptides and TLR2:TLR1:CD14 in response to triacylated lipopeptides. In Gorilla gorilla gorilla (Western lowland gorilla), this protein is Toll-like receptor 2 (TLR2).